A 272-amino-acid polypeptide reads, in one-letter code: CDAN1-interacting nuclease 1 (272 aa).

Its subcellular location is the nucleus. The protein localises to the cytoplasm. Functionally, may play a role in erythroid cell differentiation. This is CDAN1-interacting nuclease 1 (CDIN1) from Gallus gallus (Chicken).